The sequence spans 159 residues: Growth arrest and DNA damage-inducible protein GADD45 gamma (159 aa).

Residues 43-86 (VYESAKVLNVDPDNVTFCVLAAGEEDEGDIALQIHFTLIQAFCC) are homodimerization.

This sequence belongs to the GADD45 family. As to quaternary structure, undergoes concentration-dependent homodimerization, which is required for growth inhibititory activity and enhances interaction with PCNA. Interacts with GADD45GIP1. Interacts with PCNA.

Its function is as follows. Involved in the regulation of growth and apoptosis. Mediates activation of stress-responsive MTK1/MEKK4 MAPKKK. In Homo sapiens (Human), this protein is Growth arrest and DNA damage-inducible protein GADD45 gamma (GADD45G).